A 1232-amino-acid chain; its full sequence is DNA-directed RNA polymerase subunit beta (1232 aa).

Residues 1170–1232 are disordered; that stretch reads SVDEDADELE…LDLDDFGDEH (63 aa). The span at 1171–1180 shows a compositional bias: acidic residues; it reads VDEDADELEV. The span at 1189 to 1198 shows a compositional bias: basic and acidic residues; the sequence is PEEKEEKEKE. The span at 1199–1232 shows a compositional bias: acidic residues; it reads DSDEYDDLREEDVEPDLEELSLDDLDLDDFGDEH.

This sequence belongs to the RNA polymerase beta chain family. As to quaternary structure, the RNAP catalytic core consists of 2 alpha, 1 beta, 1 beta' and 1 omega subunit. When a sigma factor is associated with the core the holoenzyme is formed, which can initiate transcription.

It catalyses the reaction RNA(n) + a ribonucleoside 5'-triphosphate = RNA(n+1) + diphosphate. DNA-dependent RNA polymerase catalyzes the transcription of DNA into RNA using the four ribonucleoside triphosphates as substrates. In Clostridium botulinum (strain Hall / ATCC 3502 / NCTC 13319 / Type A), this protein is DNA-directed RNA polymerase subunit beta.